Consider the following 229-residue polypeptide: Cytidylate kinase (229 aa).

An ATP-binding site is contributed by 12–20 (GPSGTGKSS).

The protein belongs to the cytidylate kinase family. Type 1 subfamily.

It localises to the cytoplasm. It carries out the reaction CMP + ATP = CDP + ADP. It catalyses the reaction dCMP + ATP = dCDP + ADP. The chain is Cytidylate kinase from Rhodococcus jostii (strain RHA1).